The primary structure comprises 496 residues: Docking protein 3 (496 aa).

A disordered region spans residues 18 to 38 (LSLDGGTGSGQKGKCEEFPSS). The 117-residue stretch at 63-179 (PIKDGILYQQ…WMGPICQLAF (117 aa)) folds into the PH domain. Ser194 carries the phosphoserine modification. One can recognise an IRS-type PTB domain in the interval 213 to 317 (EVGEFPVVVQ…ARQRERLPEL (105 aa)). Residues 313 to 363 (RLPELTRPQPCPLPRATSLPSLDTPGELREMPPGPEPPTSRKMHLAEPGPQ) form a disordered region. Phosphoserine is present on residues Ser330 and Ser364. At Tyr381 the chain carries Phosphotyrosine. The interval 408 to 447 (PTLHGGEPEPHEGPGSRSPTTSPIYHNGQDLSWPGPANDS) is disordered. Ser425 bears the Phosphoserine mark.

This sequence belongs to the DOK family. Type A subfamily. As to quaternary structure, on tyrosine phosphorylation, interacts with CSK and INPP5D/SHIP1 via their SH2 domains. Both Tyr-381 and Tyr-398 are required for interaction with INPP5D. Only Tyr-381 is required for interaction with CSK. Binds ABL1 through the PTB domain and in a kinase-dependent manner. Does not interact with RasGAP. Post-translationally, constitutively tyrosine-phosphorylated. On IL2 stimulation, phosphorylated on C-terminal tyrosine residues possibly by Src kinases. Can also be phosphorylated by ABL1 kinase. In terms of tissue distribution, expressed in spleen.

Its subcellular location is the cytoplasm. It is found in the cell membrane. Its function is as follows. DOK proteins are enzymatically inert adaptor or scaffolding proteins. They provide a docking platform for the assembly of multimolecular signaling complexes. DOK3 is a negative regulator of JNK signaling in B-cells through interaction with INPP5D/SHIP1. May modulate ABL1 function. The polypeptide is Docking protein 3 (DOK3) (Homo sapiens (Human)).